We begin with the raw amino-acid sequence, 337 residues long: Terpene cyclase (337 aa).

A helical transmembrane segment spans residues 5–25 (ASVIFLSLSVLAAVGVWGPFV). The N-linked (GlcNAc...) asparagine glycan is linked to N65. Helical transmembrane passes span 72-92 (IAYCFMMQFLANVAVIPVILC), 111-131 (GLLSQLGTSAVIYPLYAMSFI), 149-169 (ALILNMAMGYALPAAITLNVL), 177-197 (IWGILAFTVYPICMKLMARII), 222-242 (VAGGVALQGHLWYLGTELGIF), 267-287 (LQVDYAITFLAMLLLAWHELI), and 298-318 (LGGLIIGWILVGPGATLAAAW).

The protein belongs to the membrane-bound ascI terpene cyclase family.

The protein resides in the membrane. It participates in antifungal biosynthesis. Functionally, cyclase; part of the gene cluster that mediates the biosynthesis of the tetrahydropyranyl antifungal agent lanomycin that acts as an inhibitor of CYP51 and blocks the ergosterol biosynthesis. The biosynthesis probably begins with the formation of an hexaketide, followed by methionine mediated alkylation of C-2 and C-6, and methylation of the reduced C-3 oxygen, pyran forming reductive ring closure, oxygenation of C-4, beta-keto reduction, enoyl reduction and dehydration of the remaining oxygens, and finally, acylation with glycine to complete the biosynthesis. In Pyrenophora dematioidea (Helminthosporium dematioideum), this protein is Terpene cyclase.